The primary structure comprises 208 residues: Proheparin-binding EGF-like growth factor (208 aa).

A signal peptide spans 1-19 (MKLLPSVVLKLLLAAVLSA). Residues 20–62 (LVTGESLEQLRRGLAAGTSNPDPSTGSTDQLLRLGGGRDRKVR) constitute a propeptide that is removed on maturation. At 20-160 (LVTGESLEQL…ENRLYTYDHT (141 aa)) the chain is on the extracellular side. The segment at 34-55 (AAGTSNPDPSTGSTDQLLRLGG) is disordered. The span at 36 to 49 (GTSNPDPSTGSTDQ) shows a compositional bias: polar residues. O-linked (GalNAc...) threonine glycans are attached at residues threonine 75 and threonine 85. The segment at 81–104 (QALATPSKEEHGKRKKKGKGLGKK) is disordered. A compositionally biased stretch (basic residues) spans 93–102 (KRKKKGKGLG). One can recognise an EGF-like domain in the interval 104 to 144 (KRDPCLRKYKDFCIHGECKYVKELRAPSCICHPGYHGERCH). Cystine bridges form between cysteine 108–cysteine 121, cysteine 116–cysteine 132, and cysteine 134–cysteine 143. The tract at residues 136-148 (PGYHGERCHGLSL) is toxin-binding domain. Residues 149–208 (PVENRLYTYDHTTILAVVAVVLSSVCLLVIVGLLMFRYHRRGGYDVENEEKVKLGMTNSH) constitute a propeptide, C-terminal. Residues 161-184 (TILAVVAVVLSSVCLLVIVGLLMF) traverse the membrane as a helical segment. The Cytoplasmic segment spans residues 185 to 208 (RYHRRGGYDVENEEKVKLGMTNSH).

Interacts with EGFR and ERBB4. Interacts with FBLN1. Post-translationally, O-glycosylated.

The protein localises to the secreted. It localises to the extracellular space. It is found in the cell membrane. In terms of biological role, growth factor that mediates its effects via EGFR, ERBB2 and ERBB4. Required for normal cardiac valve formation and normal heart function. Promotes smooth muscle cell proliferation. May be involved in macrophage-mediated cellular proliferation. It is mitogenic for fibroblasts, but not endothelial cells. It is able to bind EGF receptor/EGFR with higher affinity than EGF itself and is a far more potent mitogen for smooth muscle cells than EGF. Also acts as a diphtheria toxin receptor. This is Proheparin-binding EGF-like growth factor (HBEGF) from Chlorocebus aethiops (Green monkey).